Consider the following 159-residue polypeptide: MNIKIIGVGKVKEKYFKAGIAEYAKRMERYAKFEIVEVPDEKAPETLSQAEMDAVMAKEGERILAKIKDREYVYALAIKGKERSSEEFAKEINQLATYGHSDITFVIGGSLGLSPAVLKRANTQISFGRFTLPHKLMRLVLAEQIYRAFTIINGLPYHK.

Residues L76 and G108 each coordinate S-adenosyl-L-methionine.

The protein belongs to the RNA methyltransferase RlmH family. Homodimer.

It is found in the cytoplasm. It carries out the reaction pseudouridine(1915) in 23S rRNA + S-adenosyl-L-methionine = N(3)-methylpseudouridine(1915) in 23S rRNA + S-adenosyl-L-homocysteine + H(+). In terms of biological role, specifically methylates the pseudouridine at position 1915 (m3Psi1915) in 23S rRNA. This chain is Ribosomal RNA large subunit methyltransferase H, found in Limosilactobacillus fermentum (strain NBRC 3956 / LMG 18251) (Lactobacillus fermentum).